We begin with the raw amino-acid sequence, 429 residues long: Fumarylacetoacetase (429 aa).

Asp-139 contacts Ca(2+). The active-site Proton acceptor is the His-146. Residue Arg-155 coordinates substrate. Residues Glu-212, Glu-214, and Asp-246 each contribute to the Ca(2+) site. Asp-246 is a binding site for Mg(2+). Substrate is bound at residue Gln-253. Mg(2+)-binding residues include Lys-266 and Thr-270. Thr-363 contributes to the substrate binding site.

This sequence belongs to the FAH family. The cofactor is Ca(2+). Mg(2+) is required as a cofactor.

The enzyme catalyses 4-fumarylacetoacetate + H2O = acetoacetate + fumarate + H(+). It participates in amino-acid degradation; L-phenylalanine degradation; acetoacetate and fumarate from L-phenylalanine: step 6/6. In terms of biological role, converts fumarylacetoacetate to acetoacetate and fumarate. Involved in tyrosine catabolic pathway. Catalyzes the final step in the tyrosine degradation pathway. In Oryza sativa subsp. japonica (Rice), this protein is Fumarylacetoacetase.